A 221-amino-acid chain; its full sequence is UPF0502 protein PSPTO_2686 (221 aa).

It belongs to the UPF0502 family.

This chain is UPF0502 protein PSPTO_2686, found in Pseudomonas syringae pv. tomato (strain ATCC BAA-871 / DC3000).